The chain runs to 1719 residues: 5'-3' exoribonuclease 1 (1719 aa).

Residues 1268–1298 (HKSGFTDHSVRHQQRKHDSQRKFKEEYKSPK) show a composition bias toward basic and acidic residues. Residues 1268 to 1317 (HKSGFTDHSVRHQQRKHDSQRKFKEEYKSPKAECQSQKLSSKQTSGGSAR) are disordered. The segment covering 1301-1314 (CQSQKLSSKQTSGG) has biased composition (polar residues). S1382 is modified (phosphoserine). Residues 1397–1430 (ILKIDSPDTRDSKNDMKKSDNEATVSSRRDERGV) show a composition bias toward basic and acidic residues. Disordered stretches follow at residues 1397–1445 (ILKI…KPHG) and 1634–1719 (ENKE…KPSE). Residues 1638–1660 (AQSSQATPLQTNKPGSSEATKMT) are compositionally biased toward polar residues. The segment covering 1661–1680 (PQESPPASSSSSQAAQPVSS) has biased composition (low complexity). Positions 1681–1690 (HVETASQGHV) are enriched in polar residues.

Belongs to the 5'-3' exonuclease family. As to quaternary structure, found in a mRNP complex with UPF1, UPF2, UPF3B and XRN1. Associates with alpha and beta tubulins. Interacts with DIS3L2. Interacts with ZC3HAV1 in an RNA-dependent manner. Interacts with ZFP36L1. Interacts with TRIM71 (via NHL repeats) in an RNA-dependent manner. Interacts with YTHDC2 (via ANK repeats). Interacts with DHX34; the interaction is RNA-independent. Expressed in heart, brain (spinal cord, dorsal root and superior cervical ganglia, neurons of the cerebrum and brain stem), peripheral nerve fibers in the skin and intestine, spleen, lung, liver, skeletal muscle, kidney and testis.

The protein resides in the cytoplasm. Functionally, major 5'-3' exoribonuclease involved in mRNA decay. Required for the 5'-3'-processing of the G4 tetraplex-containing DNA and RNA substrates. The kinetic of hydrolysis is faster for G4 RNA tetraplex than for G4 DNA tetraplex and monomeric RNA tetraplex. Binds to RNA and DNA. Plays a role in replication-dependent histone mRNA degradation. This is 5'-3' exoribonuclease 1 from Mus musculus (Mouse).